A 670-amino-acid polypeptide reads, in one-letter code: DNA ligase (670 aa).

Residues 34–38, 83–84, and E113 contribute to the NAD(+) site; these read DFEFD and SL. Catalysis depends on K115, which acts as the N6-AMP-lysine intermediate. NAD(+) contacts are provided by R136, E173, K288, and K312. Residues C406, C409, C424, and C430 each coordinate Zn(2+). In terms of domain architecture, BRCT spans 591 to 670; the sequence is PESDKFAGKS…EAEFISLLNS (80 aa).

The protein belongs to the NAD-dependent DNA ligase family. LigA subfamily. Mg(2+) serves as cofactor. The cofactor is Mn(2+).

It carries out the reaction NAD(+) + (deoxyribonucleotide)n-3'-hydroxyl + 5'-phospho-(deoxyribonucleotide)m = (deoxyribonucleotide)n+m + AMP + beta-nicotinamide D-nucleotide.. DNA ligase that catalyzes the formation of phosphodiester linkages between 5'-phosphoryl and 3'-hydroxyl groups in double-stranded DNA using NAD as a coenzyme and as the energy source for the reaction. It is essential for DNA replication and repair of damaged DNA. This chain is DNA ligase, found in Cytophaga hutchinsonii (strain ATCC 33406 / DSM 1761 / CIP 103989 / NBRC 15051 / NCIMB 9469 / D465).